The following is a 978-amino-acid chain: Serine/threonine-protein kinase PLK4 (978 aa).

The Protein kinase domain occupies 13–266 (FQVLDLLGKG…LSGILDHPFI (254 aa)). Residues 19–27 (LGKGGFACV) and K42 contribute to the ATP site. D137 functions as the Proton acceptor in the catalytic mechanism. 2 stretches are compositionally biased toward polar residues: residues 271–282 (LNTKYSSPTRQH) and 291–304 (SLDS…TIST). Disordered regions lie at residues 271–381 (LNTK…TRTS), 489–578 (IEQP…AERL), 788–818 (AWKN…SSPS), and 838–869 (AQTT…QPIP). The span at 324-335 (RTSDIWPRDPKH) shows a compositional bias: basic and acidic residues. 2 stretches are compositionally biased toward polar residues: residues 351–362 (TENVTTGSSSHV) and 371–381 (AQYSGLKTRTS). Composition is skewed to basic and acidic residues over residues 518 to 527 (GSDSVSKDFD) and 536 to 566 (ESRR…DKSL). A Cryptic POLO box 1 (CPB1) domain is found at 565-678 (SLGELTEPLN…AKFVQLVRKL (114 aa)). Positions 679–792 (TPKVTLYSKH…GRRPPAWKNS (114 aa)) constitute a Cryptic POLO box 2 (CPB2) domain. The span at 801-818 (QQGCSNGQSQPVLPSSPS) shows a compositional bias: polar residues. The segment covering 848 to 862 (KSRKTSPSKTSRHKQ) has biased composition (basic residues). The POLO box domain occupies 895–973 (HVCKMAFVDG…LPAVIKTLAT (79 aa)).

This sequence belongs to the protein kinase superfamily. Ser/Thr protein kinase family. CDC5/Polo subfamily. As to quaternary structure, homodimer. In terms of processing, ubiquitinated; leading to its degradation by the proteasome.

The protein localises to the cytoplasm. Its subcellular location is the cytoskeleton. It localises to the microtubule organizing center. The protein resides in the centrosome. It is found in the centriole. It catalyses the reaction L-seryl-[protein] + ATP = O-phospho-L-seryl-[protein] + ADP + H(+). The catalysed reaction is L-threonyl-[protein] + ATP = O-phospho-L-threonyl-[protein] + ADP + H(+). In terms of biological role, serine/threonine-protein kinase that plays a central role in centriole duplication. Able to trigger procentriole formation on the surface of the mother centriole cylinder, leading to the recruitment of centriole biogenesis proteins. When overexpressed, it is able to induce centrosome amplification through the simultaneous generation of multiple procentrioles adjoining each parental centriole during S phase. This Nematostella vectensis (Starlet sea anemone) protein is Serine/threonine-protein kinase PLK4.